The sequence spans 220 residues: Guanylate kinase (220 aa).

A Guanylate kinase-like domain is found at 16-195; that stretch reads GLMFVLSSPS…AFESVRSILR (180 aa). 23 to 30 is a binding site for ATP; that stretch reads SPSGAGKT.

This sequence belongs to the guanylate kinase family.

It localises to the cytoplasm. It carries out the reaction GMP + ATP = GDP + ADP. Essential for recycling GMP and indirectly, cGMP. The chain is Guanylate kinase from Rhodopseudomonas palustris (strain ATCC BAA-98 / CGA009).